The following is a 510-amino-acid chain: ATP synthase subunit alpha (510 aa).

170-177 serves as a coordination point for ATP; sequence GDRQTGKT.

The protein belongs to the ATPase alpha/beta chains family. F-type ATPases have 2 components, CF(1) - the catalytic core - and CF(0) - the membrane proton channel. CF(1) has five subunits: alpha(3), beta(3), gamma(1), delta(1), epsilon(1). CF(0) has three main subunits: a(1), b(2) and c(9-12). The alpha and beta chains form an alternating ring which encloses part of the gamma chain. CF(1) is attached to CF(0) by a central stalk formed by the gamma and epsilon chains, while a peripheral stalk is formed by the delta and b chains.

The protein localises to the cell inner membrane. It catalyses the reaction ATP + H2O + 4 H(+)(in) = ADP + phosphate + 5 H(+)(out). Its function is as follows. Produces ATP from ADP in the presence of a proton gradient across the membrane. The alpha chain is a regulatory subunit. This Acidiphilium cryptum (strain JF-5) protein is ATP synthase subunit alpha.